The primary structure comprises 228 residues: Protein-L-isoaspartate O-methyltransferase (228 aa).

The tract at residues 1–20 (MVAVSLKMSQPAAPPPPMGE) is disordered. The active site involves Ser76.

This sequence belongs to the methyltransferase superfamily. L-isoaspartyl/D-aspartyl protein methyltransferase family.

The protein resides in the cytoplasm. It carries out the reaction [protein]-L-isoaspartate + S-adenosyl-L-methionine = [protein]-L-isoaspartate alpha-methyl ester + S-adenosyl-L-homocysteine. In terms of biological role, catalyzes the methyl esterification of L-isoaspartyl residues in peptides and proteins that result from spontaneous decomposition of normal L-aspartyl and L-asparaginyl residues. It plays a role in the repair and/or degradation of damaged proteins. In Magnetococcus marinus (strain ATCC BAA-1437 / JCM 17883 / MC-1), this protein is Protein-L-isoaspartate O-methyltransferase.